A 431-amino-acid polypeptide reads, in one-letter code: tRNA-2-methylthio-N(6)-dimethylallyladenosine synthase (431 aa).

Residues 4-120 (RAVYIKTFGC…IENIIENQVS (117 aa)) form the MTTase N-terminal domain. [4Fe-4S] cluster is bound by residues cysteine 13, cysteine 49, cysteine 83, cysteine 154, cysteine 158, and cysteine 161. The Radical SAM core domain maps to 140 to 367 (RKDCVKAWVN…LKLQDEITER (228 aa)). The TRAM domain occupies 370-430 (KRLEGKIQEV…RHSLEGDIIS (61 aa)).

It belongs to the methylthiotransferase family. MiaB subfamily. As to quaternary structure, monomer. [4Fe-4S] cluster is required as a cofactor.

It is found in the cytoplasm. It carries out the reaction N(6)-dimethylallyladenosine(37) in tRNA + (sulfur carrier)-SH + AH2 + 2 S-adenosyl-L-methionine = 2-methylsulfanyl-N(6)-dimethylallyladenosine(37) in tRNA + (sulfur carrier)-H + 5'-deoxyadenosine + L-methionine + A + S-adenosyl-L-homocysteine + 2 H(+). Catalyzes the methylthiolation of N6-(dimethylallyl)adenosine (i(6)A), leading to the formation of 2-methylthio-N6-(dimethylallyl)adenosine (ms(2)i(6)A) at position 37 in tRNAs that read codons beginning with uridine. The protein is tRNA-2-methylthio-N(6)-dimethylallyladenosine synthase of Thermodesulfovibrio yellowstonii (strain ATCC 51303 / DSM 11347 / YP87).